We begin with the raw amino-acid sequence, 506 residues long: Tetratricopeptide repeat protein 8 (506 aa).

The interval 83–112 (RPGTSFARPKTSAKGVNPILRPTTNAGRPL) is disordered. TPR repeat units follow at residues 217 to 250 (YYWKNQLAKCYLRLGMLQDATKQLQSSLEQKKLI), 251 to 283 (ETFALLSKAYNRVDQPMAALKTYSAGLEVFPEN), 284 to 317 (VTMLTGMARVQEALGEYDESVKLYKRVLDAESNN), 319 to 351 (EAIACVATTYYYGGKPELAMRYYRRILQMGVSS), 353 to 385 (ELFLNIGLCCMAAQQFDFALSSILRAQSTMTDD), 388 to 421 (ADVWYNIGQILVDIGDLVSAARSFRIALSHDPDH), 423 to 455 (ESLVNLGILKHREGKIDEARSLYSSATSKNPYM), and 456 to 489 (FEGNYNLGLVSFTQGKYHECRELIEKALAAFPEH).

In terms of assembly, part of BBSome complex, that contains at least bbs-1, bbs-2, bbs-4, bbs-5, osm-12, bbs-8/ttc-8 and bbs-9. As to expression, expressed in head and tail neurons. Expressed in ciliated male tail-neurons. Expressed in thermosensory and CO(2) sensory AFD neurons.

It is found in the cell projection. The protein resides in the cilium. Its subcellular location is the cytoplasm. It localises to the cytoskeleton. The protein localises to the cilium basal body. It is found in the cilium axoneme. Its function is as follows. Component of the BBSome complex. The BBSome complex is thought to function as a coat complex required for sorting of specific membrane proteins to the primary cilia. The BBSome complex is required for ciliogenesis but is dispensable for centriolar satellite function. Required for proper BBSome complex assembly and its ciliary localization. Required for cilia biogenesis and both the assembly and movement of intraflagellar transport proteins along the ciliary axoneme. Plays a role in guanylyl cyclase localization in the ring-like structures at the base of the finger compartment in AFD sensory neurons. The polypeptide is Tetratricopeptide repeat protein 8 (Caenorhabditis elegans).